The primary structure comprises 104 residues: Transcription initiation factor IIA subunit 2 (104 aa).

Belongs to the TFIIA subunit 2 family. TFIIA is a heterodimer of the large unprocessed subunit 1 and a small subunit gamma.

The protein resides in the nucleus. In terms of biological role, TFIIA is a component of the transcription machinery of RNA polymerase II and plays an important role in transcriptional activation. TFIIA in a complex with TBP mediates transcriptional activity. The protein is Transcription initiation factor IIA subunit 2 of Schistosoma mansoni (Blood fluke).